Here is a 145-residue protein sequence, read N- to C-terminus: Putative antiporter subunit mnhG2 (145 aa).

The next 3 helical transmembrane spans lie at 11-31, 51-71, and 72-92; these read IAAVMLLLGSFIALISAIGIV, VLLTLIGVLIYFIVNTGFFSV, and RLLLSLVFINLTSPVGMHLVA.

The protein belongs to the CPA3 antiporters (TC 2.A.63) subunit G family. In terms of assembly, may form a heterooligomeric complex that consists of seven subunits: mnhA2, mnhB2, mnhC2, mnhD2, mnhE2, mnhF2 and mnhG2.

It is found in the cell membrane. In Staphylococcus aureus (strain bovine RF122 / ET3-1), this protein is Putative antiporter subunit mnhG2 (mnhG2).